We begin with the raw amino-acid sequence, 477 residues long: MIKPRTPPGIMELLPREQIAFQRMLDVIRRNYERFGFLPVETPVFELSDVLLTKSGGETERQVYFVQSTGALANAAAAADEGAESGGLPELALRFDLTVPLARYVAEHEHELSFPFRRYQMQRVYRGERAQRGRFREFYQCDIDVIGKDALSIRYDAEVLAVIHAVFAELGIGDFKVQLNNRKLLRGFFESLGVAEGELQLAVLREVDKIDKRGAEYVRDTLAGEGFGIAAAQVDKILAFVAVRSNGHADALAQLQALETSVGASVTLGEGIAELREVLELVKALGVPETAYCLNFSIARGLDYYTGTVYETTLTDHPQIGSICSGGRYENLASHYTKSKLPGVGISIGLTRLFWQLREAGLIAGIAESSVHAMVALMDESRLDDALDIARRLRIGGINTEVQMEPKKVGKQFQYAARAGIRFVVLAGDDELARGVVAVKDLVREQQFDVARDELASTLQVELEQAKAMLVSGIAAN.

The protein belongs to the class-II aminoacyl-tRNA synthetase family. As to quaternary structure, homodimer.

It is found in the cytoplasm. It carries out the reaction tRNA(His) + L-histidine + ATP = L-histidyl-tRNA(His) + AMP + diphosphate + H(+). The protein is Histidine--tRNA ligase (hisS) of Xanthomonas campestris pv. campestris (strain ATCC 33913 / DSM 3586 / NCPPB 528 / LMG 568 / P 25).